Consider the following 2070-residue polypeptide: MELAHSLLLNEEALAQITEAKRPVFIFEWLRFLDKVLVAANKTDVKEKQKKLVEQLTGLISSSPGPPTRKLLAKNLAALYSIGDTYTVFQTLDKCNDIIRSKDDTAAYLPTKLAAVACVGAFYEKMGRMLGSAFPETVNNLLKSLKSAESQGRSEILMSLQKVLTGLGGAAASSHRDIYKNARSLLTDRSMAVRCAVAKCLLELQNEAVFMWTAELENVATLCFKALENSNYGVRVAVSKLLGTVMATALMPKQATVMRQNVKRATFDEVLELMATGFLRGGSGFLKSGGEMLKVGGSVNREVRVGVTQAYVVFVTTLGGQWLERSFATFLSHVLDLVSHPRATQTHVDAVYSRRCVSFMLRATVGSLLGEKAQIAAAKEICQAIGKQMKAVEAVVNDTSSENKSGTADIAASQHVMVCALQELGSLVQSLNATASPLIQEASIGLLEIVTSVLLHPSMAARLAAAWCLRCVAVALPFQLTPFLDRCAERLNNLKTSPEAVSGYSFAMAALLGGVHQCPLGIPHAKGKMVVSIAEDLLRTAAQNSRLSLQRTQAGWLLLGALMTLGPSVVRYHLPKMLLLWRNVFPRSLKELEAEKARGDSFTWQVTLEGRAGALCAMRSFVAHCPELLTEDAIRKLMTPIECAMTMMSHIPSVIKAHGAHLKASAAMVRLRLYDILALLPPKTYEGSFNALLRELVAEFTLTDNSANTTTSLLRSLCHYDDSVLLGSWLQETDHKSIEDQLQPNSASGSGALEHDPSSIYLRIPAGEAVPGPLPLGVSVIDASVALFGVVFPHVSYKHRLQMLDHFAECVKQAKGVRQQAVQLNIFTAVLSALKGLAENKSTLGPEEVRKSALTLVMGALDNPNPILRCAAGEALGRMAQVVGEASFIARMAQYSFDKLKSARDVVSRTGHSLALGCLHRYVGGIGSGQHLKTSVSILLALAQDGTSPEVQTWSLHSLALIVDSSGPMYRGYVEPTLSLVLTLLLTVPPSHTEVHQCLGRCLGAIITTVGPELQGNAATISTIRSSCLVGCAITQDHSDSLVQAAAISCLQQLHMFAPRHVNLSSLVPSLCVHLCSSHLLLRRAAVACLRQLAQREAAEVCEYAMSLAKNAGDKEISGGNVNPFTPGVSSRSDVHCRHQGVNITDTGLEGLLFGMLDRETDRKLCSDIHDTLGHMLSSLAVEKLSHWLMLCKDVLAASSDMSAATLLSSGKDEESEKKDEMDDDAMFTTLGEEDKSKPFVAPRWATRVFAADCLCRIINLCENSDQAHFDLALARSAKLRNPKNDLLVLHLSDLIRMAFMAATDHSNQLRMAGLQALEDIIKKFASVPEPEFPGHVILEQYQANVGAALRPAFSQDTPSDIIAKACQVCSTWIGSGVVSDLNDLRRVHNLLVSSLDTVQAGKGSSSQLYRESATTMEKLAVLKAWAEVYVVAMNIKKEAESKPKRAMNNPDDDDDDYGTIDELPPDSLITLVQPELPTLSRLWLAALKDYALLTLPAEFSSQLPPDGGAFYTPETIDTARLHYRNSWAPILHAVALWLNSTGFISQESTEATTVSGVQKRSPAVSLNQVPGAMASAKPLPEVNKDRMHLILGVSIQFLCSPRPEEPIEHVTACLQALHTLLGSPYARIHIAEDQLIGVELLSVLHRLLLTWNPPSIQLLVTGVVQQIVRAAQDYLQEKRNALNEEDMEKESCPTLGEGGDTGGLIPGKSLVFATMELLMFILVRHMPHLSTKMLDSPSHTAMKTQLSEESARLVAATVAILSDLPSLCSPAGCMTILPTILFLIARILKDTAIKSADNQVPPPVSAALQGIKSIVTLSMAKTEDTQKQWTTLIRSTLACILEYSQPDDCMPAPDEVSTLTAIALFLWSASSEIIGVQSLQNGCMNRFKSALNSCDPWVQAKCYQLLLSVFQHSNRALSTPYIHSLAPLVVGKLKAVERHRPASSTELLAVQEGIKVLETLVALGEEQNRVQLLALLVPTLISYLLDENSFASASSISKDLHEFALQNLMHIGPLYPHAFKTVMGAAPELKARLETAVRASQASKAKAAARQPAPTTHSTPTIKLKTSFF.

HEAT repeat units lie at residues 848–885, 1062–1099, and 1290–1327; these read EVRK…VVGE, VNLS…REAA, and LHLS…KFAS. Serine 1737 is modified (phosphoserine).

Belongs to the HEATR5 family. In terms of assembly, self-associates. Component of the aftiphilin/p200/gamma-synergin complex, at least composed of AFTPH/aftiphilin, HEATR5B/p200a and SYNRG/gamma-synergin, which plays a role in the AP1G1/AP-1-mediated protein trafficking from early to recycling endosomes and between the trans-Golgi network (TGN) and endosomes. Within the complex interacts with AFTPH/aftiphilin and SYNRG/gamma-synergin; the interactions are direct. Interacts with GGA1.

It is found in the cytoplasm. The protein localises to the perinuclear region. It localises to the cytoplasmic vesicle. Its subcellular location is the clathrin-coated vesicle. In terms of biological role, component of clathrin-coated vesicles. Component of the aftiphilin/p200/gamma-synergin complex, which plays roles in AP1G1/AP-1-mediated protein trafficking including the trafficking of transferrin from early to recycling endosomes, and the membrane trafficking of furin and the lysosomal enzyme cathepsin D between the trans-Golgi network (TGN) and endosomes. The protein is HEAT repeat-containing protein 5B (Heatr5b) of Mus musculus (Mouse).